The sequence spans 374 residues: Protein A6 homolog (374 aa).

This sequence belongs to the chordopoxvirinae A6 family.

Its subcellular location is the virion. Plays an essential role in immature virion (IV) to mature virion (MV) transition. This chain is Protein A6 homolog, found in Vertebrata (FPV).